Consider the following 418-residue polypeptide: Tyrosine--tRNA ligase (418 aa).

The 'HIGH' region signature appears at 42–51 (PTAPDLHLGH). Residues 226–230 (KMSKS) carry the 'KMSKS' region motif. K229 lines the ATP pocket. Residues 339–400 (VRLVALLTKS…GKRNFAKVRL (62 aa)) enclose the S4 RNA-binding domain.

It belongs to the class-I aminoacyl-tRNA synthetase family. TyrS type 2 subfamily. Homodimer.

Its subcellular location is the cytoplasm. It carries out the reaction tRNA(Tyr) + L-tyrosine + ATP = L-tyrosyl-tRNA(Tyr) + AMP + diphosphate + H(+). Functionally, catalyzes the attachment of tyrosine to tRNA(Tyr) in a two-step reaction: tyrosine is first activated by ATP to form Tyr-AMP and then transferred to the acceptor end of tRNA(Tyr). The chain is Tyrosine--tRNA ligase from Xylella fastidiosa (strain 9a5c).